The following is a 388-amino-acid chain: Chalcone synthase DIV (388 aa).

Residue C164 is part of the active site.

Belongs to the thiolase-like superfamily. Chalcone/stilbene synthases family.

The catalysed reaction is (E)-4-coumaroyl-CoA + 3 malonyl-CoA + 3 H(+) = 2',4,4',6'-tetrahydroxychalcone + 3 CO2 + 4 CoA. It participates in secondary metabolite biosynthesis; flavonoid biosynthesis. The primary product of this enzyme is 4,2',4',6'-tetrahydroxychalcone (also termed naringenin-chalcone or chalcone) which can under specific conditions spontaneously isomerize into naringenin. The protein is Chalcone synthase DIV (CHS-DIV) of Ipomoea batatas (Sweet potato).